A 716-amino-acid polypeptide reads, in one-letter code: DNA ligase (716 aa).

NAD(+) contacts are provided by residues 49 to 53 (DAAYD), 98 to 99 (SL), and Glu-132. The active-site N6-AMP-lysine intermediate is Lys-134. NAD(+) contacts are provided by Arg-155, Glu-192, Lys-308, and Lys-332. 4 residues coordinate Zn(2+): Cys-437, Cys-439, Cys-461, and Cys-467. A BRCT domain is found at 638-716 (KRNSPIATKT…EDEWLQLIGE (79 aa)).

It belongs to the NAD-dependent DNA ligase family. LigA subfamily. The cofactor is Mg(2+). Requires Mn(2+) as cofactor.

The enzyme catalyses NAD(+) + (deoxyribonucleotide)n-3'-hydroxyl + 5'-phospho-(deoxyribonucleotide)m = (deoxyribonucleotide)n+m + AMP + beta-nicotinamide D-nucleotide.. In terms of biological role, DNA ligase that catalyzes the formation of phosphodiester linkages between 5'-phosphoryl and 3'-hydroxyl groups in double-stranded DNA using NAD as a coenzyme and as the energy source for the reaction. It is essential for DNA replication and repair of damaged DNA. The chain is DNA ligase from Bradyrhizobium sp. (strain ORS 278).